The following is a 358-amino-acid chain: Protein-arginine kinase (358 aa).

Residues 24 to 255 form the Phosphagen kinase C-terminal domain; that stretch reads IVLSSRIRLA…KQLIRQERVA (232 aa). Residues 27-31, His-92, Arg-126, 177-181, and 208-213 contribute to the ATP site; these read SSRIR, RASVM, and RGIYGE. The short motif at 338 to 343 is the RDXXRA motif of the pArg binding pocket involved in allosteric regulation element; it reads RDERRA.

It belongs to the ATP:guanido phosphotransferase family.

The enzyme catalyses L-arginyl-[protein] + ATP = N(omega)-phospho-L-arginyl-[protein] + ADP + H(+). With respect to regulation, appears to be allosterically activated by the binding of pArg-containing polypeptides to the pArg-binding pocket localized in the C-terminal domain of McsB. Catalyzes the specific phosphorylation of arginine residues in a large number of proteins. Is part of the bacterial stress response system. Protein arginine phosphorylation has a physiologically important role and is involved in the regulation of many critical cellular processes, such as protein homeostasis, motility, competence, and stringent and stress responses, by regulating gene expression and protein activity. The protein is Protein-arginine kinase of Shouchella clausii (strain KSM-K16) (Alkalihalobacillus clausii).